We begin with the raw amino-acid sequence, 250 residues long: 26S proteasome non-ATPase regulatory subunit 8 (250 aa).

The PCI domain maps to 63–233 (HDFETFDDYI…QEKPVNLDTV (171 aa)).

The protein belongs to the proteasome subunit S14 family.

Acts as a regulatory subunit of the 26S proteasome which is involved in the ATP-dependent degradation of ubiquitinated proteins. This Caenorhabditis elegans protein is 26S proteasome non-ATPase regulatory subunit 8.